The sequence spans 254 residues: Tabinhibitin 6 (254 aa).

Positions 1–22 (MLPYWCPLLLAALVLQYATIDA) are cleaved as a signal peptide. The Cell attachment site motif lies at 31–33 (RGD). In terms of domain architecture, SCP spans 66-210 (LSKINDVRDH…KARALLTCNF (145 aa)).

Belongs to the CRISP family. In terms of tissue distribution, expressed in salivary glands.

The protein localises to the secreted. Its function is as follows. Inhibits platelet aggregation induced by all agonists tested (ADP, arachidonic acid, the thromboxane A2 analog U46619, thrombin, and snake venom snaclecs (TMVA that activates platelet through GPIB, and stejnulxin that specifically acts through GPVI (GP6))). May act by competing with fibrinogen for binding to glycoprotein IIb/IIIa (ITGA2B/ITGB3). The sequence is that of Tabinhibitin 6 from Tabanus yao (Horsefly).